Consider the following 656-residue polypeptide: Macrolide export ATP-binding/permease protein MacB (656 aa).

An ABC transporter domain is found at 20–258; that stretch reads IELAGITRSF…EPDFAPHVDR (239 aa). Position 56–63 (56–63) interacts with ATP; the sequence is GASGSGKS. 4 helical membrane passes run 284–304, 531–551, 591–611, and 619–639; these read ALTL…LAIG, LTIL…IGVM, ALGG…IALF, and LLPV…FGYL.

Belongs to the ABC transporter superfamily. Macrolide exporter (TC 3.A.1.122) family. In terms of assembly, homodimer.

The protein resides in the cell inner membrane. Non-canonical ABC transporter that contains transmembrane domains (TMD), which form a pore in the inner membrane, and an ATP-binding domain (NBD), which is responsible for energy generation. Confers resistance against macrolides. The sequence is that of Macrolide export ATP-binding/permease protein MacB from Azoarcus sp. (strain BH72).